Consider the following 326-residue polypeptide: N-acetyl-gamma-glutamyl-phosphate reductase (326 aa).

Cys-155 is a catalytic residue.

Belongs to the NAGSA dehydrogenase family. Type 1 subfamily.

It localises to the cytoplasm. The enzyme catalyses N-acetyl-L-glutamate 5-semialdehyde + phosphate + NADP(+) = N-acetyl-L-glutamyl 5-phosphate + NADPH + H(+). It functions in the pathway amino-acid biosynthesis; L-arginine biosynthesis; N(2)-acetyl-L-ornithine from L-glutamate: step 3/4. Catalyzes the NADPH-dependent reduction of N-acetyl-5-glutamyl phosphate to yield N-acetyl-L-glutamate 5-semialdehyde. The sequence is that of N-acetyl-gamma-glutamyl-phosphate reductase from Shewanella baltica (strain OS185).